The chain runs to 270 residues: Endonuclease 4 (270 aa).

The Zn(2+) site is built by His-69, His-108, Glu-139, Asp-169, His-172, His-204, Asp-217, His-219, and Glu-248.

Belongs to the AP endonuclease 2 family. It depends on Zn(2+) as a cofactor.

The enzyme catalyses Endonucleolytic cleavage to 5'-phosphooligonucleotide end-products.. Endonuclease IV plays a role in DNA repair. It cleaves phosphodiester bonds at apurinic or apyrimidinic (AP) sites, generating a 3'-hydroxyl group and a 5'-terminal sugar phosphate. In addition, possesses a 3'-5' exonuclease activity. The polypeptide is Endonuclease 4 (Thermus thermophilus (strain ATCC BAA-163 / DSM 7039 / HB27)).